The primary structure comprises 263 residues: Tryptophan synthase alpha chain (263 aa).

Catalysis depends on proton acceptor residues E49 and D60.

It belongs to the TrpA family. Tetramer of two alpha and two beta chains.

It catalyses the reaction (1S,2R)-1-C-(indol-3-yl)glycerol 3-phosphate + L-serine = D-glyceraldehyde 3-phosphate + L-tryptophan + H2O. Its pathway is amino-acid biosynthesis; L-tryptophan biosynthesis; L-tryptophan from chorismate: step 5/5. The alpha subunit is responsible for the aldol cleavage of indoleglycerol phosphate to indole and glyceraldehyde 3-phosphate. This is Tryptophan synthase alpha chain from Roseobacter denitrificans (strain ATCC 33942 / OCh 114) (Erythrobacter sp. (strain OCh 114)).